Reading from the N-terminus, the 336-residue chain is Phosphate acyltransferase (336 aa).

This sequence belongs to the PlsX family. As to quaternary structure, homodimer. Probably interacts with PlsY.

The protein localises to the cytoplasm. It carries out the reaction a fatty acyl-[ACP] + phosphate = an acyl phosphate + holo-[ACP]. It participates in lipid metabolism; phospholipid metabolism. Catalyzes the reversible formation of acyl-phosphate (acyl-PO(4)) from acyl-[acyl-carrier-protein] (acyl-ACP). This enzyme utilizes acyl-ACP as fatty acyl donor, but not acyl-CoA. The protein is Phosphate acyltransferase of Pseudomonas paraeruginosa (strain DSM 24068 / PA7) (Pseudomonas aeruginosa (strain PA7)).